Here is a 1391-residue protein sequence, read N- to C-terminus: CAP-Gly domain-containing linker protein 1 (1391 aa).

Residues 1–53 are disordered; sequence MSMLKPSGLKAPTKILKPGSTALKTPAAAAAPVEKTIPSEKASGPPSSETQEE. Phosphoserine is present on serine 48. Threonine 50 is modified (phosphothreonine). In terms of domain architecture, CAP-Gly 1 spans 78–120; the sequence is GETQFAPGQWAGIVLDEPIGKNDGSVAGVRYFQCEPLKGIFTR. Residues 97 to 101 are important for tubulin binding; that stretch reads GKNDG. Positions 129-182 are disordered; it reads QAEDEANGLQAAPGRTASPLSTAAATMVSSSPATPSNIPHKPSQSTAKEPSATP. Serine 146 is modified (phosphoserine). Residues 146–182 are compositionally biased toward polar residues; that stretch reads SPLSTAAATMVSSSPATPSNIPHKPSQSTAKEPSATP. The residue at position 181 (threonine 181) is a Phosphothreonine. Residues serine 194, serine 196, serine 199, and serine 203 each carry the phosphoserine modification. Positions 231-273 constitute a CAP-Gly 2 domain; that stretch reads GETDFAKGEWCGVELDEPLGKNDGAVAGTRYFQCQPKYGLFAP. A compositionally biased stretch (low complexity) spans 302-331; that stretch reads TPASLKRSPSASSLSSMSSVASSVSSKPSR. Positions 302–336 are disordered; it reads TPASLKRSPSASSLSSMSSVASSVSSKPSRTGLLT. Residue serine 309 is modified to Phosphoserine. Serine 311 carries the phosphoserine; by PKA modification. Phosphoserine occurs at positions 314, 347, and 1189. Positions 349 to 1306 form a coiled coil; that stretch reads TTALQEALKE…VEMMSEAALN (958 aa). The disordered stretch occupies residues 1251-1272; that stretch reads KRQLSSSSGNTDAQAEEDERAQ. A Phosphoserine modification is found at serine 1317. A CCHC-type zinc finger spans residues 1370–1387; it reads PYCEICEMFGHWATNCND.

In terms of assembly, interacts with MTOR; phosphorylates and regulates CLIP1. Interacts (via CAP-Gly domains) with tubulin. Interacts with SLAIN2. Interacts with TUBA1B, MAPRE1 and MAPRE3. Interacts (via zinc finger) with DCTN1. Binds preferentially to tyrosinated microtubules, and only marginally to detyrosinated microtubules. Post-translationally, phosphorylated. Phosphorylation induces conformational changes by increasing the affinity of the N-terminus for C-terminus, resulting in inhibition of its function thus decreasing its binding to microtubules and DCTN1. Exhibits a folded, autoinhibited conformation when phosphorylated and an open conformation when dephosphorylated with increased binding affinity to microtubules and DCTN1. Phosphorylation regulates its recruitment to tyrosinated microtubules and the recruitment of vesicular cargo to microtubules in neurons. Phosphorylation by MTOR may positively regulate CLIP1 association with microtubules. As to expression, expressed in the testes (at protein level).

It is found in the cytoplasm. Its subcellular location is the cytoskeleton. The protein localises to the cytoplasmic vesicle membrane. It localises to the cell projection. The protein resides in the ruffle. Binds to the plus end of microtubules and regulates the dynamics of the microtubule cytoskeleton. Promotes microtubule growth and microtubule bundling. Links cytoplasmic vesicles to microtubules and thereby plays an important role in intracellular vesicle trafficking. Plays a role macropinocytosis and endosome trafficking. In Mus musculus (Mouse), this protein is CAP-Gly domain-containing linker protein 1 (Clip1).